The sequence spans 389 residues: tRNA-specific 2-thiouridylase MnmA (389 aa).

Residues 35–42 and M61 contribute to the ATP site; that span reads GMSGGVDS. Residues 121–123 form an interaction with target base in tRNA region; that stretch reads NPD. Residue C126 is the Nucleophile of the active site. An intrachain disulfide couples C126 to C223. Residue G151 participates in ATP binding. The interaction with tRNA stretch occupies residues 173–175; sequence KDQ. C223 (cysteine persulfide intermediate) is an active-site residue. Residues 335 to 336 are interaction with tRNA; sequence RY.

It belongs to the MnmA/TRMU family.

The protein localises to the cytoplasm. The catalysed reaction is S-sulfanyl-L-cysteinyl-[protein] + uridine(34) in tRNA + AH2 + ATP = 2-thiouridine(34) in tRNA + L-cysteinyl-[protein] + A + AMP + diphosphate + H(+). Functionally, catalyzes the 2-thiolation of uridine at the wobble position (U34) of tRNA, leading to the formation of s(2)U34. This is tRNA-specific 2-thiouridylase MnmA from Mannheimia succiniciproducens (strain KCTC 0769BP / MBEL55E).